The sequence spans 284 residues: Bifunctional protein FolD (284 aa).

NADP(+) is bound by residues 165-167 (GRS) and S190.

Belongs to the tetrahydrofolate dehydrogenase/cyclohydrolase family. Homodimer.

It catalyses the reaction (6R)-5,10-methylene-5,6,7,8-tetrahydrofolate + NADP(+) = (6R)-5,10-methenyltetrahydrofolate + NADPH. The catalysed reaction is (6R)-5,10-methenyltetrahydrofolate + H2O = (6R)-10-formyltetrahydrofolate + H(+). The protein operates within one-carbon metabolism; tetrahydrofolate interconversion. Catalyzes the oxidation of 5,10-methylenetetrahydrofolate to 5,10-methenyltetrahydrofolate and then the hydrolysis of 5,10-methenyltetrahydrofolate to 10-formyltetrahydrofolate. This chain is Bifunctional protein FolD, found in Streptococcus pyogenes serotype M28 (strain MGAS6180).